The chain runs to 346 residues: MNIFNTNPFKAVSFVESAVKKALETSGYLIADCKYDGVRGNIVVDNVAEAAWLSRVSKFIPALEHLNGFDKRWQQLLNDDRCIFPDGFMLDGELMVKGVDFNTGSGLLRTKWVKRDNMGFHLTNVPTKLTPKGREVIDGKFEFHLDPKRLSVRLYAVMPIHIAESGEDYDVQNLLMPYHVEAMRSLLVEYFPEIEWLIAETYEVYDMDSLTELYEEKRAEGHEGLIVKDPQGIYKRGKKSGWWKLKPECEADGIIQGVNWGTEGLANEGKVIGFSVLLETGRLVDANNISRALMDEFTSNVKAHGEDFYNGWACQVNYMEATPDGSLRHPSFEKFRGTEDNPQEKM.

ATP is bound by residues 32–35 (DCKY), R39, 55–57 (RVS), E93, E142, and R149. K34 acts as the N6-AMP-lysine intermediate in catalysis. An a divalent metal cation-binding site is contributed by E223. The ATP site is built by K238 and K244.

This sequence belongs to the ATP-dependent DNA ligase family. It depends on a divalent metal cation as a cofactor.

It catalyses the reaction ATP + (deoxyribonucleotide)n-3'-hydroxyl + 5'-phospho-(deoxyribonucleotide)m = (deoxyribonucleotide)n+m + AMP + diphosphate.. DNA ligase, which is expressed in the early stage of lytic development, has been implicated in T7 DNA synthesis and genetic recombination. It may also play a role in T7 DNA repair. This Enterobacteria phage T3 (Bacteriophage T3) protein is DNA ligase (1.3).